The sequence spans 451 residues: Lipase member H (451 aa).

A signal peptide spans 1–16 (MLRLCFLLSFMCLVKS). An N-linked (GlcNAc...) asparagine glycan is attached at asparagine 66. Serine 154 (nucleophile) is an active-site residue. Residue aspartate 178 is the Charge relay system of the active site. A disulfide bridge connects residues cysteine 233 and cysteine 246. The active-site Charge relay system is the histidine 248. 3 cysteine pairs are disulfide-bonded: cysteine 270-cysteine 281, cysteine 284-cysteine 292, and cysteine 427-cysteine 446.

The protein belongs to the AB hydrolase superfamily. Lipase family. As to quaternary structure, interacts with TTMP/C3orf52.

Its subcellular location is the secreted. The protein localises to the cell membrane. The enzyme catalyses 1-hexadecanoyl-2-(9Z-octadecenoyl)-sn-glycero-3-phosphate + H2O = 2-(9Z-octadecenoyl)-sn-glycero-3-phosphate + hexadecanoate + H(+). In terms of biological role, hydrolyzes specifically phosphatidic acid (PA) to produce 2-acyl lysophosphatidic acid (LPA; a potent bioactive lipid mediator) and fatty acid. Does not hydrolyze other phospholipids, like phosphatidylserine (PS), phosphatidylcholine (PC) and phosphatidylethanolamine (PE) or triacylglycerol (TG). In Rattus norvegicus (Rat), this protein is Lipase member H (Liph).